The chain runs to 485 residues: Membrane-bound lytic murein transglycosylase F (485 aa).

The first 29 residues, 1-29 (MFAHTALRQRCAKWLFATGLFLLLGACVE), serve as a signal peptide directing secretion. Residues 30-267 (KPSTLERVKE…RLKDRYYGHV (238 aa)) form a non-LT domain region. Positions 268–485 (DVLGYVGAYT…DKPADQSPPM (218 aa)) are LT domain. The active site involves Glu314. Positions 465-485 (EGNLHVPGVNKDKPADQSPPM) are disordered.

It in the N-terminal section; belongs to the bacterial solute-binding protein 3 family. In the C-terminal section; belongs to the transglycosylase Slt family.

It localises to the cell outer membrane. It carries out the reaction Exolytic cleavage of the (1-&gt;4)-beta-glycosidic linkage between N-acetylmuramic acid (MurNAc) and N-acetylglucosamine (GlcNAc) residues in peptidoglycan, from either the reducing or the non-reducing ends of the peptidoglycan chains, with concomitant formation of a 1,6-anhydrobond in the MurNAc residue.. In terms of biological role, murein-degrading enzyme that degrades murein glycan strands and insoluble, high-molecular weight murein sacculi, with the concomitant formation of a 1,6-anhydromuramoyl product. Lytic transglycosylases (LTs) play an integral role in the metabolism of the peptidoglycan (PG) sacculus. Their lytic action creates space within the PG sacculus to allow for its expansion as well as for the insertion of various structures such as secretion systems and flagella. The chain is Membrane-bound lytic murein transglycosylase F from Pseudomonas putida (strain GB-1).